We begin with the raw amino-acid sequence, 183 residues long: Adenine phosphoribosyltransferase (183 aa).

It belongs to the purine/pyrimidine phosphoribosyltransferase family. As to quaternary structure, homodimer.

It is found in the cytoplasm. It catalyses the reaction AMP + diphosphate = 5-phospho-alpha-D-ribose 1-diphosphate + adenine. It participates in purine metabolism; AMP biosynthesis via salvage pathway; AMP from adenine: step 1/1. In terms of biological role, catalyzes a salvage reaction resulting in the formation of AMP, that is energically less costly than de novo synthesis. The chain is Adenine phosphoribosyltransferase from Shewanella sp. (strain ANA-3).